The following is a 182-amino-acid chain: Ribosome-recycling factor (182 aa).

The protein belongs to the RRF family.

It is found in the cytoplasm. In terms of biological role, responsible for the release of ribosomes from messenger RNA at the termination of protein biosynthesis. May increase the efficiency of translation by recycling ribosomes from one round of translation to another. The chain is Ribosome-recycling factor from Gloeobacter violaceus (strain ATCC 29082 / PCC 7421).